The primary structure comprises 208 residues: Putative chemokine-related protein FP248 (208 aa).

The first 23 residues, 1–23 (MGTGGSLLCGCSLVLSCLCPSAS), serve as a signal peptide directing secretion. Residue N29 is glycosylated (N-linked (GlcNAc...) asparagine).

It is found in the secreted. In Homo sapiens (Human), this protein is Putative chemokine-related protein FP248.